The chain runs to 80 residues: uncharacterized protein (80 aa).

A helical transmembrane segment spans residues phenylalanine 12–phenylalanine 32.

The protein resides in the membrane. This is an uncharacterized protein from Saccharomyces cerevisiae (strain ATCC 204508 / S288c) (Baker's yeast).